A 313-amino-acid chain; its full sequence is Ribosomal RNA small subunit methyltransferase H (313 aa).

S-adenosyl-L-methionine contacts are provided by residues 34–36 (GGH), D55, F82, D103, and Q110.

The protein belongs to the methyltransferase superfamily. RsmH family.

Its subcellular location is the cytoplasm. The enzyme catalyses cytidine(1402) in 16S rRNA + S-adenosyl-L-methionine = N(4)-methylcytidine(1402) in 16S rRNA + S-adenosyl-L-homocysteine + H(+). Functionally, specifically methylates the N4 position of cytidine in position 1402 (C1402) of 16S rRNA. This Pelobacter propionicus (strain DSM 2379 / NBRC 103807 / OttBd1) protein is Ribosomal RNA small subunit methyltransferase H.